Here is a 246-residue protein sequence, read N- to C-terminus: Pyridoxine 5'-phosphate synthase (246 aa).

Asn7 contributes to the 3-amino-2-oxopropyl phosphate binding site. Residue 9–10 (DH) coordinates 1-deoxy-D-xylulose 5-phosphate. Arg18 lines the 3-amino-2-oxopropyl phosphate pocket. Catalysis depends on His43, which acts as the Proton acceptor. The 1-deoxy-D-xylulose 5-phosphate site is built by Arg45 and His50. Residue Glu70 is the Proton acceptor of the active site. Residue Thr100 coordinates 1-deoxy-D-xylulose 5-phosphate. Catalysis depends on His190, which acts as the Proton donor. Residues Gly191 and 212 to 213 (GH) each bind 3-amino-2-oxopropyl phosphate.

Belongs to the PNP synthase family. In terms of assembly, homooctamer; tetramer of dimers.

Its subcellular location is the cytoplasm. The catalysed reaction is 3-amino-2-oxopropyl phosphate + 1-deoxy-D-xylulose 5-phosphate = pyridoxine 5'-phosphate + phosphate + 2 H2O + H(+). It participates in cofactor biosynthesis; pyridoxine 5'-phosphate biosynthesis; pyridoxine 5'-phosphate from D-erythrose 4-phosphate: step 5/5. Its function is as follows. Catalyzes the complicated ring closure reaction between the two acyclic compounds 1-deoxy-D-xylulose-5-phosphate (DXP) and 3-amino-2-oxopropyl phosphate (1-amino-acetone-3-phosphate or AAP) to form pyridoxine 5'-phosphate (PNP) and inorganic phosphate. The sequence is that of Pyridoxine 5'-phosphate synthase from Prochlorococcus marinus (strain SARG / CCMP1375 / SS120).